A 560-amino-acid polypeptide reads, in one-letter code: Arginine--tRNA ligase (560 aa).

Positions 121 to 131 (PNIAKPFSMGH) match the 'HIGH' region motif.

This sequence belongs to the class-I aminoacyl-tRNA synthetase family. In terms of assembly, monomer.

The protein localises to the cytoplasm. The enzyme catalyses tRNA(Arg) + L-arginine + ATP = L-arginyl-tRNA(Arg) + AMP + diphosphate. This is Arginine--tRNA ligase from Exiguobacterium sp. (strain ATCC BAA-1283 / AT1b).